A 180-amino-acid polypeptide reads, in one-letter code: Large ribosomal subunit protein uL5 (180 aa).

This sequence belongs to the universal ribosomal protein uL5 family. Part of the 50S ribosomal subunit; part of the 5S rRNA/L5/L18/L25 subcomplex. Contacts the 5S rRNA and the P site tRNA. Forms a bridge to the 30S subunit in the 70S ribosome.

Functionally, this is one of the proteins that bind and probably mediate the attachment of the 5S RNA into the large ribosomal subunit, where it forms part of the central protuberance. In the 70S ribosome it contacts protein S13 of the 30S subunit (bridge B1b), connecting the 2 subunits; this bridge is implicated in subunit movement. Contacts the P site tRNA; the 5S rRNA and some of its associated proteins might help stabilize positioning of ribosome-bound tRNAs. In Clostridium tetani (strain Massachusetts / E88), this protein is Large ribosomal subunit protein uL5.